We begin with the raw amino-acid sequence, 697 residues long: Ion-translocating oxidoreductase complex subunit C (697 aa).

4Fe-4S ferredoxin-type domains lie at 366–397 and 407–436; these read AEMGLSEPEQSCIRCGLCVDACPAGLLPQQLY and KARNHNLFDCIECGACAYVCPSNIPLVQYY. 8 residues coordinate [4Fe-4S] cluster: Cys377, Cys380, Cys383, Cys387, Cys416, Cys419, Cys422, and Cys426. The disordered stretch occupies residues 576–674; it reads AQLESEPVKS…APEEDPRKAA (99 aa). Positions 581–596 are enriched in basic and acidic residues; the sequence is EPVKSESEAPEEDPRK. Residues 597-615 are compositionally biased toward low complexity; the sequence is AAVAAAIARVKAKKAAQAQ. A compositionally biased stretch (basic and acidic residues) spans 619–634; that stretch reads EPVKSESEAPEEDPRK. Positions 635-653 are enriched in low complexity; that stretch reads AAVAAAIARVKAKKAAQAQ. Basic and acidic residues predominate over residues 657–672; the sequence is EPVKSESEAPEEDPRK.

This sequence belongs to the 4Fe4S bacterial-type ferredoxin family. RnfC subfamily. In terms of assembly, the complex is composed of six subunits: RnfA, RnfB, RnfC, RnfD, RnfE and RnfG. Requires [4Fe-4S] cluster as cofactor.

It localises to the cell inner membrane. Part of a membrane-bound complex that couples electron transfer with translocation of ions across the membrane. In Yersinia enterocolitica serotype O:8 / biotype 1B (strain NCTC 13174 / 8081), this protein is Ion-translocating oxidoreductase complex subunit C.